Reading from the N-terminus, the 107-residue chain is Dispanin subfamily A member 2b (107 aa).

Residues 1–31 are Extracellular-facing; sequence MEYRTDQVPMSPRSVQGAPGTLPIRDHLPWS. Residues 32–52 traverse the membrane as a helical segment; sequence IFNLFYMNVCCLGLTAMIFSV. S-palmitoyl cysteine attachment occurs at residues cysteine 41 and cysteine 42. Residues 53–77 lie on the Cytoplasmic side of the membrane; the sequence is KSRDRKVVGDVEGARHYGSTARSLN. The helical transmembrane segment at 78 to 98 threads the bilayer; the sequence is IAATVLGILLIIILIGLAATG. Residues 99–107 are Extracellular-facing; that stretch reads TIQALKYKG.

This sequence belongs to the CD225/Dispanin family. Expressed various cell types in torpedo electric organ and muscle, especially fibroblasts, capillary endothelial cells, and axonal cuff cells.

It localises to the cell membrane. The protein is Dispanin subfamily A member 2b of Torpedo marmorata (Marbled electric ray).